Consider the following 537-residue polypeptide: CTP synthase (537 aa).

An amidoligase domain region spans residues 1–268 (MPAKFIFVTG…DSIVVERLKL (268 aa)). Ser-14 provides a ligand contact to CTP. UTP is bound at residue Ser-14. An ATP-binding site is contributed by 15–20 (SLGKGI). Tyr-55 contributes to the L-glutamine binding site. Residue Asp-72 participates in ATP binding. 2 residues coordinate Mg(2+): Asp-72 and Glu-142. CTP is bound by residues 149-151 (DIE), 189-194 (KTKPTQ), and Lys-225. UTP contacts are provided by residues 189–194 (KTKPTQ) and Lys-225. Residues 293–534 (EIALVGKYVT…IGAACRRAGG (242 aa)) enclose the Glutamine amidotransferase type-1 domain. Residue Gly-354 participates in L-glutamine binding. The Nucleophile; for glutamine hydrolysis role is filled by Cys-381. Residues 382-385 (LGMQ), Glu-405, and Arg-462 contribute to the L-glutamine site. Catalysis depends on residues His-507 and Glu-509.

Belongs to the CTP synthase family. In terms of assembly, homotetramer.

It catalyses the reaction UTP + L-glutamine + ATP + H2O = CTP + L-glutamate + ADP + phosphate + 2 H(+). The enzyme catalyses L-glutamine + H2O = L-glutamate + NH4(+). It carries out the reaction UTP + NH4(+) + ATP = CTP + ADP + phosphate + 2 H(+). The protein operates within pyrimidine metabolism; CTP biosynthesis via de novo pathway; CTP from UDP: step 2/2. With respect to regulation, allosterically activated by GTP, when glutamine is the substrate; GTP has no effect on the reaction when ammonia is the substrate. The allosteric effector GTP functions by stabilizing the protein conformation that binds the tetrahedral intermediate(s) formed during glutamine hydrolysis. Inhibited by the product CTP, via allosteric rather than competitive inhibition. In terms of biological role, catalyzes the ATP-dependent amination of UTP to CTP with either L-glutamine or ammonia as the source of nitrogen. Regulates intracellular CTP levels through interactions with the four ribonucleotide triphosphates. This is CTP synthase from Moorella thermoacetica (strain ATCC 39073 / JCM 9320).